A 285-amino-acid polypeptide reads, in one-letter code: 4-diphosphocytidyl-2-C-methyl-D-erythritol kinase (285 aa).

Residue K11 is part of the active site. 95–105 (PVAAGIGGGSA) lines the ATP pocket. D137 is an active-site residue.

This sequence belongs to the GHMP kinase family. IspE subfamily.

The catalysed reaction is 4-CDP-2-C-methyl-D-erythritol + ATP = 4-CDP-2-C-methyl-D-erythritol 2-phosphate + ADP + H(+). The protein operates within isoprenoid biosynthesis; isopentenyl diphosphate biosynthesis via DXP pathway; isopentenyl diphosphate from 1-deoxy-D-xylulose 5-phosphate: step 3/6. Catalyzes the phosphorylation of the position 2 hydroxy group of 4-diphosphocytidyl-2C-methyl-D-erythritol. This chain is 4-diphosphocytidyl-2-C-methyl-D-erythritol kinase, found in Paramagnetospirillum magneticum (strain ATCC 700264 / AMB-1) (Magnetospirillum magneticum).